A 98-amino-acid polypeptide reads, in one-letter code: Large ribosomal subunit protein bL27 (98 aa).

Positions 1–9 (MLKMNLQLF) are excised as a propeptide.

This sequence belongs to the bacterial ribosomal protein bL27 family. In terms of processing, the N-terminus is cleaved by ribosomal processing cysteine protease Prp.

The protein is Large ribosomal subunit protein bL27 of Desulfitobacterium hafniense (strain DSM 10664 / DCB-2).